The sequence spans 297 residues: MAAVQQKHDWADDDELEETSTELPPPQKITNKDGSTTIIEYRLNDNGQKVKTTRRIRYITHREVVNPRVAERKSWTKFGLSVKDGAGPAPDTTSVGENIIFKPSFNWRQEAKDESKDPNAQAMKDKLKDKKVKCRICNGEHFTARCPYKDTMAPIGEAGAAADVAASAADEAAAASQGAAGAGKKGSYVPPALRGAGGAAAAGERMGGKYGERDDLATLRVTNVSEMAEEQELRDMFERFGRVTRVFLAKDRDTGLAKGFAFISFADRSDAVKACAKMDGFGFRHLILRVEFAKKAA.

The segment covering 1 to 10 has biased composition (basic and acidic residues); sequence MAAVQQKHDW. The tract at residues 1-35 is disordered; it reads MAAVQQKHDWADDDELEETSTELPPPQKITNKDGS. Residues 11–20 show a composition bias toward acidic residues; that stretch reads ADDDELEETS. The region spanning 217–295 is the RRM domain; that stretch reads ATLRVTNVSE…LILRVEFAKK (79 aa).

The protein belongs to the eIF-3 subunit G family. Component of the eukaryotic translation initiation factor 3 (eIF-3) complex.

The protein localises to the cytoplasm. RNA-binding component of the eukaryotic translation initiation factor 3 (eIF-3) complex, which is involved in protein synthesis of a specialized repertoire of mRNAs and, together with other initiation factors, stimulates binding of mRNA and methionyl-tRNAi to the 40S ribosome. The eIF-3 complex specifically targets and initiates translation of a subset of mRNAs involved in cell proliferation. This subunit can bind 18S rRNA. The protein is Eukaryotic translation initiation factor 3 subunit G (eif3g) of Neurospora crassa (strain ATCC 24698 / 74-OR23-1A / CBS 708.71 / DSM 1257 / FGSC 987).